The primary structure comprises 157 residues: Small ribosomal subunit protein uS7 (157 aa).

The protein belongs to the universal ribosomal protein uS7 family. In terms of assembly, part of the 30S ribosomal subunit. Contacts proteins S9 and S11.

Its function is as follows. One of the primary rRNA binding proteins, it binds directly to 16S rRNA where it nucleates assembly of the head domain of the 30S subunit. Is located at the subunit interface close to the decoding center, probably blocks exit of the E-site tRNA. The sequence is that of Small ribosomal subunit protein uS7 from Roseiflexus castenholzii (strain DSM 13941 / HLO8).